A 399-amino-acid polypeptide reads, in one-letter code: uncharacterized protein (399 aa).

10 helical membrane-spanning segments follow: residues 6–26, 27–47, 60–80, 111–131, 147–167, 173–193, 195–215, 220–240, 328–348, and 362–382; these read HLTF…LIIP, KGYN…FIPL, LIFS…INKD, ILYA…FQKF, MGNI…HFFI, STLF…LSGA, GGWI…KEFI, IITL…SPKF, GLVG…YFIK, and ILGI…SFLA.

The protein localises to the cell membrane. This is an uncharacterized protein from Haemophilus influenzae (strain ATCC 51907 / DSM 11121 / KW20 / Rd).